The sequence spans 5762 residues: Mucin-5B (5762 aa).

Residues 1 to 25 (MGAPSACRTLVLALAAMLVVPQAET) form the signal peptide. The disordered stretch occupies residues 27 to 50 (GPVEPSWENAGHTMDGGAPTSSPT). Residues 75 to 245 (RVCSTWGDFH…KLDGPTEQCP (171 aa)) form the VWFD 1 domain. 2 disulfides stabilise this stretch: Cys77–Cys207 and Cys99–Cys244. Residue Asn145 is glycosylated (N-linked (GlcNAc...) asparagine). Glu194 lines the Cu(2+) pocket. Asn201 and Asn254 each carry an N-linked (GlcNAc...) asparagine glycan. Cu(2+)-binding residues include His311 and His358. The region spanning 329–385 (CPLNMQHQECGSPCTDTCSNPQRAQLCEDHCVDGCFCPPGTVLDDITHSGCLPLGQC) is the TIL 1 domain. Asn401 carries an N-linked (GlcNAc...) asparagine glycan. The VWFD 2 domain maps to 423 to 598 (GTCSVQGGAH…NTWKAQAACA (176 aa)). Intrachain disulfides connect Cys425–Cys562, Cys447–Cys597, and Cys469–Cys477. Asn515 is a glycosylation site (N-linked (GlcNAc...) asparagine). TIL domains lie at 695–752 (CPKS…AQEC) and 805–855 (NSSA…EEDC). Asn805 carries N-linked (GlcNAc...) asparagine glycosylation. The 73-residue stretch at 855–927 (CPCVHNEATY…EYILAQDYCG (73 aa)) folds into the VWFC 1 domain. The region spanning 893 to 1062 (GTCVAYGDGH…NSWKLSPSCP (170 aa)) is the VWFD 3 domain. 4 disulfide bridges follow: Cys895-Cys1026, Cys917-Cys1061, Cys926-Cys1023, and Cys944-Cys951. Asn929 carries an N-linked (GlcNAc...) asparagine glycan. Residues Asn1276 and Asn1292 are each glycosylated (N-linked (GlcNAc...) asparagine). The Cys-rich subdomain 1 repeat unit spans residues 1333–1432 (CVREVCRWSS…RVLCCEYVPC (100 aa)). A 7 X Cys-rich subdomain repeats region spans residues 1333–4228 (CVREVCRWSS…RVFCCNYGHC (2896 aa)). Trp1340 carries a C-linked (Man) tryptophan glycan. Disordered stretches follow at residues 1437–1462 (APGTSPQPSLSASTEPAVPTPTQTTA) and 1480–1502 (LTSQTGSSSGPVTVTPSAPGTTT). Low complexity predominate over residues 1450–1462 (TEPAVPTPTQTTA). One copy of the Cys-rich subdomain 2 repeat lies at 1503–1604 (CQPRCQWTEW…VLCCSDDHCR (102 aa)). Trp1509 is a glycosylation site (C-linked (Man) tryptophan). Residue Asn1556 is glycosylated (N-linked (GlcNAc...) asparagine). The disordered stretch occupies residues 1607–1783 (ATTPPPTTEL…NTTTSQGTTR (177 aa)). Residues 1614–1624 (TELETATTTTT) show a composition bias toward low complexity. 2 stretches are compositionally biased toward polar residues: residues 1625–1638 (QALFSTPQPTSSPG) and 1645–1662 (ASTTAVPTLSEGLTSPRY). Residues 1663 to 1684 (TSTLGTATTGGPTTPAGSTEPT) show a composition bias toward low complexity. Residues 1689–1706 (ATSTLPTRSALPGTTGSL) show a composition bias toward polar residues. Low complexity-rich tracts occupy residues 1739–1756 (EPLTTSLAPTLTSELSTS) and 1765–1777 (TETTMSPLTNTTT). An N-linked (GlcNAc...) asparagine glycan is attached at Asn1774. A Cys-rich subdomain 3 repeat occupies 1784–1885 (CQPKCEWTEW…VLCCDDYSHC (102 aa)). Trp1790 carries C-linked (Man) tryptophan glycosylation. Residues 1890–1987 (ATSSTATPSS…TSVTPIPSSS (98 aa)) are compositionally biased toward low complexity. Disordered regions lie at residues 1890 to 2019 (ATSS…TAHT), 2031 to 2100 (GATG…GTTH), 2114 to 2211 (TGSM…HTVR), and 2242 to 2302 (TGTT…SSPT). The tract at residues 1890–2199 (ATSSTATPSS…VPNTMATTHG (310 aa)) is 11 X approximate tandem repeats, Ser/Thr-rich. Polar residues predominate over residues 1988-1997 (LGTTWTRLSQ). A compositionally biased stretch (low complexity) spans 1998–2019 (TTTPTATMSTATPSSTPETAHT). Residues 2114–2181 (TGSMATPSSS…TSNTVTPSSA (68 aa)) show a composition bias toward low complexity. Polar residues predominate over residues 2182–2199 (LGTTHTPPVPNTMATTHG). One copy of the Cys-rich subdomain 4 repeat lies at 2313–2414 (GCEPQCAWSE…RVFCCNYGHC (102 aa)). A glycan (C-linked (Man) tryptophan) is linked at Trp2320. The segment at 2419-2756 (ATSSTAMPSS…VPNTTATTHG (338 aa)) is 11 X approximate tandem repeats, Ser/Thr-rich. Disordered regions lie at residues 2443–2462 (ATTTESTGSTATPSSTPGTT), 2473–2522 (TVTV…ATAL), and 2556–2861 (TTPT…PTSA). A compositionally biased stretch (low complexity) spans 2556-2738 (TTPTATMSTA…TSSTVTPSSA (183 aa)). Polar residues predominate over residues 2739–2786 (LGTTHTPPVPNTTATTHGRSLSPSSPHTVRTAWTSATSGTLGTTHITE). A glycan (N-linked (GlcNAc...) asparagine) is linked at Asn2749. Low complexity predominate over residues 2787–2861 (PSTGTSHTPA…TLLPSSPTSA (75 aa)). The stretch at 2854-2886 (LPSSPTSAPITTVVTMGCEPQCAWSEWLDYSYP) is one HAT 1 repeat. Residues 2871-2971 (CEPQCAWSEW…RVFCCNYGHC (101 aa)) form a Cys-rich subdomain 5 repeat. Residue Trp2877 is glycosylated (C-linked (Man) tryptophan). Residues 2976-3456 (ATSSTATPSS…VPNTTATTHG (481 aa)) form a 17 X approximate tandem repeats, Ser/Thr-rich region. Low complexity-rich tracts occupy residues 3001 to 3017 (TTTATTGSTAIPSSTPG) and 3026 to 3049 (TSTATTPTATSSKATSSSSPRTAT). Disordered stretches follow at residues 3001 to 3049 (TTTA…RTAT), 3256 to 3357 (TTPT…GTTH), 3371 to 3469 (TGSM…TVRT), and 3481 to 3561 (TTHI…PTSA). A compositionally biased stretch (low complexity) spans 3371–3438 (TGSMATPSSS…TSSTVTPSSA (68 aa)). Residues 3439–3456 (LGTTHTPPVPNTTATTHG) are compositionally biased toward polar residues. An N-linked (GlcNAc...) asparagine glycan is attached at Asn3449. Low complexity predominate over residues 3487-3561 (PSTVTSHTPA…TLLPSSPTSA (75 aa)). The HAT 2 repeat unit spans residues 3554-3586 (LPSSPTSAPITTVVTTGCEPQCAWSEWLDYSYP). The stretch at 3571–3671 (CEPQCAWSEW…RVFCCNYGHC (101 aa)) is one Cys-rich subdomain 6 repeat. The C-linked (Man) tryptophan glycan is linked to Trp3577. Residues 3676–4013 (ATSSTATPSS…VPNTTATTHG (338 aa)) are 11 X approximate tandem repeats, Ser/Thr-rich. Disordered regions lie at residues 3699-3779 (TATT…ATAL), 3813-3917 (TTPT…HTPT), and 3956-4118 (ATGS…PTSA). Positions 3956–3995 (ATGSTTNPSSTPGTTPIPPVLTTTATTPAATSSTVTPSSA) are enriched in low complexity. The span at 3996-4043 (LGTTHTPPVPNTTATTHGRSLSPSSPHTVRTAWTSATSGTLGTTHITE) shows a compositional bias: polar residues. An N-linked (GlcNAc...) asparagine glycan is attached at Asn4006. The span at 4044-4118 (PSTGTSHTPA…TLLPSSPTSA (75 aa)) shows a compositional bias: low complexity. An HAT 3 repeat occupies 4111–4143 (LPSSPTSAPITTVVTTGCEPQCAWSEWLDYSYP). The stretch at 4128-4228 (CEPQCAWSEW…RVFCCNYGHC (101 aa)) is one Cys-rich subdomain 7 repeat. The C-linked (Man) tryptophan glycan is linked to Trp4134. Residues 4233 to 4879 (ATSSTAMPSS…TLGTAHTPKV (647 aa)) form a 23 X approximate tandem repeats, Ser/Thr-rich region. 2 stretches are compositionally biased toward low complexity: residues 4259–4274 (TTASTGSTATPSSTPG) and 4283–4389 (TSPA…PGTT). Disordered stretches follow at residues 4259-4389 (TTAS…PGTT), 4428-4447 (ATTTASTGSTATPSSTPGTT), 4458-4527 (TVTV…AIPS), and 4541-4750 (TTPT…ATSF). Residues Asn4804, Asn4960, Asn5017, Asn5024, Asn5046, Asn5096, and Asn5111 are each glycosylated (N-linked (GlcNAc...) asparagine). A VWFD 4 domain is found at 5073–5261 (CICSMWGGSH…VPDSRKDGCW (189 aa)). Intrachain disulfides connect Cys5075-Cys5221, Cys5097-Cys5260, and Cys5121-Cys5132. Asn5215 is a glycosylation site (N-linked (GlcNAc...) asparagine). The VWFC 2 domain maps to 5412-5484 (CPCVGPDGFP…NPCCPETVCV (73 aa)). 9 N-linked (GlcNAc...) asparagine glycosylation sites follow: Asn5486, Asn5526, Asn5565, Asn5566, Asn5602, Asn5612, Asn5663, Asn5677, and Asn5721. Positions 5521–5587 (QLCSYNGTFY…VAGQCCGECV (67 aa)) constitute a VWFC 3 domain. 4 disulfides stabilise this stretch: Cys5653–Cys5705, Cys5672–Cys5719, Cys5681–Cys5735, and Cys5685–Cys5737. Residues 5653–5742 (CEEDSCQVRI…DECGCTPFCV (90 aa)) form the CTCK domain.

As to quaternary structure, homomultimer; disulfide-linked. The N- and C-terminus mediate their assembly into higher order structures to form filaments. The CTCK domains of two polypeptides associate in the endoplasmic reticulum to generate intermolecularly disulfide-bonded dimers. These dimers progress to the Golgi apparatus, which is a more acidic environment than the endoplasmic reticulum. Under acidic conditions, the N-termini form non-covalent intermolecular interactions that juxtapose assemblies from different CTCK-linked dimers to produce long, disulfide-linked polymers that remain highly compact until secretion. Post-translationally, highly glycosylated. C-, N- and O-glycosylated. C-mannosylated in the Cys-rich subdomains probably on the first Trp residue of the WXXW motif. Highly O-glycosylated in the Ser/Thr-rich tandem repeat (TR) region. The repeat region is about 59% O-glycosylated with a high abundance of NeuAc(2)Hex(1)HexNac1-ol. Expressed on surface airway epithelia. Expressed mainly in mucous cells of submucosal glands of airway tissues. Highly expressed in the sublingual gland. Also found in submaxillary glands, endocervix, gall bladder, and pancreas.

Its subcellular location is the secreted. Gel-forming mucin that is thought to contribute to the lubricating and viscoelastic properties of whole saliva and cervical mucus. The polypeptide is Mucin-5B (MUC5B) (Homo sapiens (Human)).